Consider the following 286-residue polypeptide: tRNA (guanine-N(1)-)-methyltransferase (286 aa).

Residues G116 and 140 to 145 (IGDYVL) contribute to the S-adenosyl-L-methionine site. The tract at residues 232–286 (DALPPGSLTPHEEALAAEARLHAGRSAETPPPAGAAGSQAEGPPGTSPSDAAVAH) is disordered.

The protein belongs to the RNA methyltransferase TrmD family. Homodimer.

The protein resides in the cytoplasm. The catalysed reaction is guanosine(37) in tRNA + S-adenosyl-L-methionine = N(1)-methylguanosine(37) in tRNA + S-adenosyl-L-homocysteine + H(+). Functionally, specifically methylates guanosine-37 in various tRNAs. This chain is tRNA (guanine-N(1)-)-methyltransferase, found in Acidothermus cellulolyticus (strain ATCC 43068 / DSM 8971 / 11B).